Consider the following 347-residue polypeptide: NADH-ubiquinone oxidoreductase chain 2 (347 aa).

10 helical membrane-spanning segments follow: residues 26 to 46 (WLLA…ILTM), 60 to 80 (FLTQ…NFML), 96 to 116 (SMAL…FWVP), 123 to 143 (SLTS…SILY), 151 to 171 (ITIL…GGLN), 178 to 198 (ILAY…PYNP), 200 to 220 (LTIL…MIMM), 240 to 260 (MMIL…LSGF), 274 to 294 (DSII…YFYM), and 325 to 345 (LLPP…FLSI).

It belongs to the complex I subunit 2 family. In terms of assembly, core subunit of respiratory chain NADH dehydrogenase (Complex I) which is composed of 45 different subunits. Interacts with TMEM242.

The protein localises to the mitochondrion inner membrane. It catalyses the reaction a ubiquinone + NADH + 5 H(+)(in) = a ubiquinol + NAD(+) + 4 H(+)(out). In terms of biological role, core subunit of the mitochondrial membrane respiratory chain NADH dehydrogenase (Complex I) which catalyzes electron transfer from NADH through the respiratory chain, using ubiquinone as an electron acceptor. Essential for the catalytic activity and assembly of complex I. The sequence is that of NADH-ubiquinone oxidoreductase chain 2 from Dugong dugon (Dugong).